Reading from the N-terminus, the 271-residue chain is Formamidopyrimidine-DNA glycosylase (271 aa).

The active-site Schiff-base intermediate with DNA is the proline 2. Residue glutamate 3 is the Proton donor of the active site. Catalysis depends on lysine 57, which acts as the Proton donor; for beta-elimination activity. DNA-binding residues include histidine 90, arginine 109, and lysine 151. An FPG-type zinc finger spans residues 236-270; the sequence is HVYGRGGETCTQCGNLLSEIRLGQRTTVFCGICQT. Arginine 260 (proton donor; for delta-elimination activity) is an active-site residue.

It belongs to the FPG family. As to quaternary structure, monomer. Zn(2+) serves as cofactor.

It catalyses the reaction Hydrolysis of DNA containing ring-opened 7-methylguanine residues, releasing 2,6-diamino-4-hydroxy-5-(N-methyl)formamidopyrimidine.. The catalysed reaction is 2'-deoxyribonucleotide-(2'-deoxyribose 5'-phosphate)-2'-deoxyribonucleotide-DNA = a 3'-end 2'-deoxyribonucleotide-(2,3-dehydro-2,3-deoxyribose 5'-phosphate)-DNA + a 5'-end 5'-phospho-2'-deoxyribonucleoside-DNA + H(+). In terms of biological role, involved in base excision repair of DNA damaged by oxidation or by mutagenic agents. Acts as a DNA glycosylase that recognizes and removes damaged bases. Has a preference for oxidized purines, such as 7,8-dihydro-8-oxoguanine (8-oxoG). Has AP (apurinic/apyrimidinic) lyase activity and introduces nicks in the DNA strand. Cleaves the DNA backbone by beta-delta elimination to generate a single-strand break at the site of the removed base with both 3'- and 5'-phosphates. In Shewanella sp. (strain MR-4), this protein is Formamidopyrimidine-DNA glycosylase.